A 191-amino-acid chain; its full sequence is Chromobox protein homolog 5 (191 aa).

4 positions are modified to phosphoserine: serine 11, serine 12, serine 13, and serine 14. Positions 20 to 78 (YVVEKVLDRRVVKGQVEYLLKWKGFSEEHNTWEPEKNLDCPELISEFMKKYKKMKEGEN) constitute a Chromo 1 domain. Lysine 32 is covalently cross-linked (Glycyl lysine isopeptide (Lys-Gly) (interchain with G-Cter in SUMO2)). An N6-acetyllysine modification is found at lysine 40. Residues 70-117 (YKKMKEGENNKPREKSESNKRKSNFSNSADDIKSKKKREQSNDIARGF) form a disordered region. Positions 73-89 (MKEGENNKPREKSESNK) are enriched in basic and acidic residues. Residue lysine 91 forms a Glycyl lysine isopeptide (Lys-Gly) (interchain with G-Cter in SUMO2) linkage. Phosphoserine is present on residues serine 92, serine 95, and serine 97. Residues lysine 102, lysine 106, lysine 154, and lysine 184 each participate in a glycyl lysine isopeptide (Lys-Gly) (interchain with G-Cter in SUMO2) cross-link. Positions 121–179 (LEPEKIIGATDSCGDLMFLMKWKDTDEADLVLAKEANVKCPQIVIAFYEERLTWHAYPE) constitute a Chromo 2; shadow subtype domain.

As to quaternary structure, homodimer. Interacts with histone H3 methylated at 'Lys-9'. Interacts (via Chromo 2; shadow subtype domain) with the MIS12 complex subunit NSL1; the interaction is direct, involves dimeric CBX5, and occurs during interphase. Interacts with POGZ; POGZ and PXVXL motif-containing proteins such as INCENP and TRIM28 compete for interaction with CBX5. Interacts with LRIF1 (via PxVxL motif). Interacts with INCENP. Interacts with TRIM24. Interacts (via the chromoshadow domain) with ATRX; the interaction is direct. Interacts (via the chromoshadow domain) with CHAF1A; the interaction is direct. Interacts (via the chromoshadow domain) with LBR; the interaction is direct. Interacts (via the chromoshadow domain) with NIPBL; the interaction is direct. Interacts (via the chromoshadow domain) with SP100; the interaction is direct. Interacts (via the chromoshadow domain) with STAM2; the interaction is direct. Interacts (via the chromoshadow domain) with TRIM28; the interaction is direct. Interacts (via the chromoshadow domain) with CBX3; the interaction is direct. Interacts with PRR14 (via N-terminus). Interacts with RRP1B. Interacts with HNRNPU (via C-terminus); this interaction is, at least in part, RNA-dependent. Interacts with ZNF263; recruited to the SIX3 promoter along with other proteins involved in chromatin modification and transcriptional corepression where it contributes to transcriptional repression. Interacts with AURKB during mitosis. Interacts with CHAMP1. Interacts with BAHD1. Interacts with HP1BP3. Interacts with CHD3. Interacts with CHD4. Interacts with SMYD5. Interacts with KMT5B. Interacts with KMT5C. In terms of assembly, (Microbial infection) Interacts with JC virus agnoprotein; this interaction induces the dissociation of CBX5 from LBR, resulting in destabilization of the nuclear envelope. Phosphorylation of HP1 and LBR may be responsible for some of the alterations in chromatin organization and nuclear structure which occur at various times during the cell cycle. Phosphorylated during interphase and possibly hyper-phosphorylated during mitosis. Post-translationally, ubiquitinated.

It is found in the nucleus. The protein localises to the chromosome. The protein resides in the centromere. Its function is as follows. Component of heterochromatin that recognizes and binds histone H3 tails methylated at 'Lys-9' (H3K9me), leading to epigenetic repression. In contrast, it is excluded from chromatin when 'Tyr-41' of histone H3 is phosphorylated (H3Y41ph). May contribute to the association of heterochromatin with the inner nuclear membrane by interactions with the lamin-B receptor (LBR). Involved in the formation of kinetochore through interaction with the MIS12 complex subunit NSL1. Required for the formation of the inner centromere. The chain is Chromobox protein homolog 5 (CBX5) from Homo sapiens (Human).